The primary structure comprises 568 residues: WW domain-containing protein A (568 aa).

Residues 6–129 (PLNNSNGSNS…TGPISHDVVF (124 aa)) enclose the C2 domain. The WW 1 domain maps to 325–359 (VKLPDGWESRIDPVSGKVFYLNHNNKTTSWISPLE). Residues 376–461 (TILDNNNNNN…SRPKKTPATP (86 aa)) are disordered. Positions 380-418 (NNNNNNNNNNNNNNNNNNNNNNINNTNNIQQKQQAQQQP) are enriched in low complexity. The span at 435–451 (QKEKEKEKEINAEDYKI) shows a compositional bias: basic and acidic residues. Positions 519-552 (QGLPNGWEVRQDQFGRVFYVDHINRATTWTRPTV) constitute a WW 2 domain.

Interacts with calmodulin in the absence of Ca(2+).

It localises to the nucleus. The protein localises to the nucleolus. It is found in the cytoplasm. The protein resides in the cell cortex. Its subcellular location is the cytoskeleton. In terms of biological role, involved in regulation of actin cytoskeleton organization and cytokinesis. The sequence is that of WW domain-containing protein A from Dictyostelium discoideum (Social amoeba).